A 158-amino-acid polypeptide reads, in one-letter code: Small ribosomal subunit protein bS16 (158 aa).

Over residues 111–121 the composition is skewed to low complexity; the sequence is AAAGLAEAPTK. Residues 111-158 are disordered; the sequence is AAAGLAEAPTKPAKKAPKAEAAPKTEAAPKADAPKTEEQAGAGSGEQG. The segment covering 127–148 has biased composition (basic and acidic residues); the sequence is PKAEAAPKTEAAPKADAPKTEE.

Belongs to the bacterial ribosomal protein bS16 family.

The protein is Small ribosomal subunit protein bS16 of Salinispora arenicola (strain CNS-205).